Consider the following 206-residue polypeptide: Small ribosomal subunit protein uS4 (206 aa).

Positions 25-39 (DKLLDRKPNGPGKER) are enriched in basic and acidic residues. The interval 25–49 (DKLLDRKPNGPGKERGARKRGKTSV) is disordered. Positions 95–157 (QRLDNTIYRM…KGIQNLIRHN (63 aa)) constitute an S4 RNA-binding domain.

This sequence belongs to the universal ribosomal protein uS4 family. In terms of assembly, part of the 30S ribosomal subunit. Contacts protein S5. The interaction surface between S4 and S5 is involved in control of translational fidelity.

Its function is as follows. One of the primary rRNA binding proteins, it binds directly to 16S rRNA where it nucleates assembly of the body of the 30S subunit. In terms of biological role, with S5 and S12 plays an important role in translational accuracy. This is Small ribosomal subunit protein uS4 from Treponema denticola (strain ATCC 35405 / DSM 14222 / CIP 103919 / JCM 8153 / KCTC 15104).